Reading from the N-terminus, the 533-residue chain is Na(+)/H(+) antiporter NhaB (533 aa).

Helical transmembrane passes span 10–30 (IGNF…SFLI), 67–87 (PGGL…SQVL), 96–116 (VLLL…LLLF), 131–165 (VSLM…FYSI), 209–229 (LLMH…VGEP), 247–267 (IRMS…CFLV), 310–330 (AFVG…VGLI), 355–375 (EEAL…AVII), 396–416 (LVIF…VFVG), 454–474 (ATPN…APLI), and 481–501 (MVWM…MAIE).

Belongs to the NhaB Na(+)/H(+) (TC 2.A.34) antiporter family.

The protein localises to the cell inner membrane. It carries out the reaction 2 Na(+)(in) + 3 H(+)(out) = 2 Na(+)(out) + 3 H(+)(in). Na(+)/H(+) antiporter that extrudes sodium in exchange for external protons. In Shewanella sp. (strain MR-4), this protein is Na(+)/H(+) antiporter NhaB.